The chain runs to 402 residues: Multidrug resistance protein MdtH (402 aa).

The next 11 membrane-spanning stretches (helical) occupy residues 13–33 (YFLL…FPLI), 34–54 (SIRF…ALGL), 99–116 (PWLL…GTLF), 139–159 (LLMM…SWLL), 165–185 (LVCA…AWLL), 214–234 (VLTL…LPIM), 243–263 (AAVK…LYPI), 277–297 (LMAG…VSSV), 300–320 (LFVL…ARET), 340–360 (LGLA…FDSG), and 368–388 (LPWV…WWQF).

The protein belongs to the major facilitator superfamily. DHA1 family. MdtH (TC 2.A.1.2.21) subfamily.

The protein resides in the cell inner membrane. In Enterobacter sp. (strain 638), this protein is Multidrug resistance protein MdtH.